A 235-amino-acid polypeptide reads, in one-letter code: Probable transcriptional regulatory protein Cj1172c (235 aa).

Belongs to the TACO1 family.

The protein localises to the cytoplasm. This chain is Probable transcriptional regulatory protein Cj1172c, found in Campylobacter jejuni subsp. jejuni serotype O:2 (strain ATCC 700819 / NCTC 11168).